The primary structure comprises 80 residues: Exodeoxyribonuclease 7 small subunit (80 aa).

The protein belongs to the XseB family. As to quaternary structure, heterooligomer composed of large and small subunits.

It is found in the cytoplasm. The enzyme catalyses Exonucleolytic cleavage in either 5'- to 3'- or 3'- to 5'-direction to yield nucleoside 5'-phosphates.. Bidirectionally degrades single-stranded DNA into large acid-insoluble oligonucleotides, which are then degraded further into small acid-soluble oligonucleotides. The sequence is that of Exodeoxyribonuclease 7 small subunit from Rickettsia canadensis (strain McKiel).